Here is a 416-residue protein sequence, read N- to C-terminus: Enolase (416 aa).

Gln-160 serves as a coordination point for (2R)-2-phosphoglycerate. Residue Glu-204 is the Proton donor of the active site. Residues Asp-239, Glu-282, and Asp-308 each coordinate Mg(2+). Lys-333, Arg-362, Ser-363, and Lys-384 together coordinate (2R)-2-phosphoglycerate. Lys-333 (proton acceptor) is an active-site residue.

Belongs to the enolase family. Mg(2+) serves as cofactor.

It is found in the cytoplasm. It localises to the secreted. The protein localises to the cell surface. It catalyses the reaction (2R)-2-phosphoglycerate = phosphoenolpyruvate + H2O. The protein operates within carbohydrate degradation; glycolysis; pyruvate from D-glyceraldehyde 3-phosphate: step 4/5. In terms of biological role, catalyzes the reversible conversion of 2-phosphoglycerate (2-PG) into phosphoenolpyruvate (PEP). It is essential for the degradation of carbohydrates via glycolysis. The sequence is that of Enolase from Metallosphaera sedula (strain ATCC 51363 / DSM 5348 / JCM 9185 / NBRC 15509 / TH2).